Reading from the N-terminus, the 137-residue chain is Large ribosomal subunit protein bL17 (137 aa).

The protein belongs to the bacterial ribosomal protein bL17 family. Part of the 50S ribosomal subunit. Contacts protein L32.

This is Large ribosomal subunit protein bL17 from Bradyrhizobium sp. (strain ORS 278).